Consider the following 157-residue polypeptide: Transcriptional repressor NrdR (157 aa).

Residues 1 to 21 (MKCPNCHKNGSRVVDSRPADN) are disordered. The segment at 3 to 34 (CPNCHKNGSRVVDSRPADNGHAIRRRRECEQC) is a zinc-finger region. The ATP-cone domain maps to 49–139 (LLVIKKNGTR…VYREFKDMHA (91 aa)).

The protein belongs to the NrdR family. Requires Zn(2+) as cofactor.

Its function is as follows. Negatively regulates transcription of bacterial ribonucleotide reductase nrd genes and operons by binding to NrdR-boxes. The sequence is that of Transcriptional repressor NrdR from Ligilactobacillus salivarius (strain UCC118) (Lactobacillus salivarius).